Here is an 87-residue protein sequence, read N- to C-terminus: Putative defensin-like protein 235 (87 aa).

A signal peptide spans 1 to 26 (MRSATFFLVSCVLMSFVLSHVKEVEA). Cystine bridges form between C46–C73, C54–C82, and C71–C84.

The protein belongs to the DEFL family.

The protein resides in the secreted. This chain is Putative defensin-like protein 235 (SCRL26), found in Arabidopsis thaliana (Mouse-ear cress).